Reading from the N-terminus, the 216-residue chain is Somatotropin (216 aa).

The N-terminal stretch at 1–26 is a signal peptide; the sequence is MAAGPRTSVLLAFTLLCLPWPQEAGA. H45 lines the Zn(2+) pocket. Cysteines 78 and 189 form a disulfide. Phosphoserine is present on S131. Residue E198 participates in Zn(2+) binding. Cysteines 206 and 214 form a disulfide.

It belongs to the somatotropin/prolactin family.

Its subcellular location is the secreted. Plays an important role in growth control. Its major role in stimulating body growth is to stimulate the liver and other tissues to secrete IGF1. It stimulates both the differentiation and proliferation of myoblasts. It also stimulates amino acid uptake and protein synthesis in muscle and other tissues. The sequence is that of Somatotropin (GH1) from Camelus dromedarius (Dromedary).